The sequence spans 277 residues: Energy-coupling factor transporter ATP-binding protein EcfA (277 aa).

The ABC transporter domain maps to 4 to 238; it reads LETRDLTHIY…PELLTQTRLD (235 aa). Residue 37-44 participates in ATP binding; that stretch reads GPNGAGKS.

It belongs to the ABC transporter superfamily. Energy-coupling factor EcfA family. In terms of assembly, forms a stable energy-coupling factor (ECF) transporter complex composed of 2 membrane-embedded substrate-binding proteins (S component), 2 ATP-binding proteins (A component) and 2 transmembrane proteins (T component).

The protein resides in the cell membrane. In terms of biological role, ATP-binding (A) component of a common energy-coupling factor (ECF) ABC-transporter complex. Unlike classic ABC transporters this ECF transporter provides the energy necessary to transport a number of different substrates. In Methanoculleus marisnigri (strain ATCC 35101 / DSM 1498 / JR1), this protein is Energy-coupling factor transporter ATP-binding protein EcfA.